The following is a 235-amino-acid chain: Hydroxyacylglutathione hydrolase (235 aa).

Zn(2+)-binding residues include His53, His55, Asp57, His58, His109, Asp127, and His165.

This sequence belongs to the metallo-beta-lactamase superfamily. Glyoxalase II family. In terms of assembly, monomer. Requires Zn(2+) as cofactor.

The catalysed reaction is an S-(2-hydroxyacyl)glutathione + H2O = a 2-hydroxy carboxylate + glutathione + H(+). It functions in the pathway secondary metabolite metabolism; methylglyoxal degradation; (R)-lactate from methylglyoxal: step 2/2. Thiolesterase that catalyzes the hydrolysis of S-D-lactoyl-glutathione to form glutathione and D-lactic acid. In Glaesserella parasuis serovar 5 (strain SH0165) (Haemophilus parasuis), this protein is Hydroxyacylglutathione hydrolase.